The following is a 2138-amino-acid chain: Non-reducing polyketide synthase rads2 (2138 aa).

The interval 11-249 (LIFGDQTDSW…NPLNIHALQH (239 aa)) is N-terminal acylcarrier protein transacylase (SAT) domain. The Ketosynthase family 3 (KS3) domain occupies 373–804 (SGRIAIVGMA…GGNACMLLED (432 aa)). Active-site for beta-ketoacyl synthase activity residues include Cys-549, His-684, and His-724. Residues 901-1184 (VFVFGGQGSH…KGVCTSFVRA (284 aa)) are malonyl-CoA:ACP transacylase (MAT) domain. The active-site For acyl/malonyl transferase activity is Ser-992. The segment at 1291–1437 (AQYVVQESPS…KDVQRLQADW (147 aa)) is N-terminal hotdog fold. The region spanning 1291-1610 (AQYVVQESPS…FHEISNATLK (320 aa)) is the PKS/mFAS DH domain. The product template (PT) domain stretch occupies residues 1303 to 1607 (KKIQVTFRAS…GLEFHEISNA (305 aa)). A C-terminal hotdog fold region spans residues 1459 to 1610 (HGHRFQPDIF…FHEISNATLK (152 aa)). The disordered stretch occupies residues 1618–1666 (SKSVLKPDNAAPLKAPEKKEDATPTAPKKSADPGKEEEEEGDTATPAAV). The Carrier domain occupies 1666–1740 (VGEFEVIIQT…DLRRAFAMAP (75 aa)). Ser-1700 is modified (O-(pantetheine 4'-phosphoryl)serine). The segment covering 1740–1771 (PSSSSSTSASESVSESLDDSSSTSRSATPSSS) has biased composition (low complexity). 2 disordered regions span residues 1740-1781 (PSSS…GFVE) and 1807-1828 (QATKVQPQAPAATAADNDSSPA). The thioesterase (TE) domain stretch occupies residues 1860 to 2006 (ADGTGSIATY…TRRHLGAMFS (147 aa)).

Its pathway is secondary metabolite biosynthesis. Its function is as follows. Non-reducing polyketide synthase; part of the gene cluster that mediates the biosynthesis of radicicol, a resorcylic acid lactone (RAL) that irreversibly inhibits the HSP90 molecular chaperone, an important target for cancer chemotherapy. The cluster encodes only two apparent post-PKS enzymes, a cytochrome P450 monooxygenase (radP) and a non-heme halogenase (radH) that introduce the epoxide and the chlorine, respectively. If this cluster includes all the genes required for radicicol biosynthesis, the remaining structural features of radicicol are presumably generated by the PKSs rads1 and rads2. The C-2' ketone could arise if the R-PKS rads1 and NR-PKS rads2 each carry out four iterations, in contrast to the five iteration-three iteration split for the hypothemycin PKSs. The origin of the cis 5',6' double bond is not known. The radicicol R-PKS rads1 ER domain may catalyze either double bond isomerization or reduction in the third iteration. This is Non-reducing polyketide synthase rads2 from Floropilus chiversii (Chaetomium chiversii).